The primary structure comprises 1403 residues: E3 ubiquitin-protein ligase SNT2 (1403 aa).

The segment at 40–62 (SGAKTKGSNSQTPRNCKRTSNPA) is disordered. Residues 45 to 62 (KGSNSQTPRNCKRTSNPA) show a composition bias toward polar residues. Residues 121–258 (VLLSANDTIY…RYTLKYYKVY (138 aa)) form the BAH domain. Residues 317 to 369 (DKRCQFCKEWCIQKESLSCDECGVCAHLYCMDPPLDRKPNKDVVWTCFSCLQK) form a PHD-type 1 zinc finger. Residues 555–606 (LKEPSFTAVEIRKFEEAVEKFGSELRPVCEYVGTQPMSMIVRFYYNWKKTER) form the SANT domain. A PHD-type 2 zinc finger spans residues 1038–1097 (RTFCSVCKEKFNDNDNYEVVCGNCGLTVHYFCYAIKLPKDMKKNTNLKTFKWLCDPCSND). Residues 1041–1095 (CSVCKEKFNDNDNYEVVCGNCGLTVHYFCYAIKLPKDMKKNTNLKTFKWLCDPCS) form an RING-type; degenerate zinc finger. The C2HC pre-PHD-type zinc-finger motif lies at 1105–1153 (TYQCSMCPTKDYDYDRYRSQSFKICPDALKCTSLGTWVHLVCSLFNEDI). A PHD-type 3; degenerate zinc finger spans residues 1177–1231 (FTCGVCRINGGGLVKCNKCQYRYHITCAQNSSNFKLMFEKKNMSVDTTLPCIKDV).

Component of the Snt2C complex composed of SNT2, ECM5 and RPD3. Interacts with the E2 ubiquitin-conjugating enzyme UBC4 and histones H3 and H4. Binding is enhanced to methylated histone H3K36me3.

The protein resides in the cytoplasm. It is found in the nucleus. The catalysed reaction is S-ubiquitinyl-[E2 ubiquitin-conjugating enzyme]-L-cysteine + [acceptor protein]-L-lysine = [E2 ubiquitin-conjugating enzyme]-L-cysteine + N(6)-ubiquitinyl-[acceptor protein]-L-lysine.. In terms of biological role, transcriptional regulator that, together with ECM5, recruits histone deacetylase RPD3 to a small number of promoters of stress-response genes in response to oxidative stress. Probable ubiquitin-protein ligase involved in the degradation-related ubiquitination of histones. Contributes to the post-translational regulation of histone protein levels by polyubiquitination of excess histones for subsequent degradation. The polypeptide is E3 ubiquitin-protein ligase SNT2 (Saccharomyces cerevisiae (strain ATCC 204508 / S288c) (Baker's yeast)).